Here is a 396-residue protein sequence, read N- to C-terminus: Phosphopentomutase (396 aa).

6 residues coordinate Mn(2+): D13, D288, H293, D329, H330, and H341.

This sequence belongs to the phosphopentomutase family. The cofactor is Mn(2+).

The protein resides in the cytoplasm. The catalysed reaction is 2-deoxy-alpha-D-ribose 1-phosphate = 2-deoxy-D-ribose 5-phosphate. It carries out the reaction alpha-D-ribose 1-phosphate = D-ribose 5-phosphate. It participates in carbohydrate degradation; 2-deoxy-D-ribose 1-phosphate degradation; D-glyceraldehyde 3-phosphate and acetaldehyde from 2-deoxy-alpha-D-ribose 1-phosphate: step 1/2. In terms of biological role, isomerase that catalyzes the conversion of deoxy-ribose 1-phosphate (dRib-1-P) and ribose 1-phosphate (Rib-1-P) to deoxy-ribose 5-phosphate (dRib-5-P) and ribose 5-phosphate (Rib-5-P), respectively. The chain is Phosphopentomutase from Clostridium perfringens (strain ATCC 13124 / DSM 756 / JCM 1290 / NCIMB 6125 / NCTC 8237 / Type A).